A 358-amino-acid chain; its full sequence is Alanine racemase (358 aa).

K34 acts as the Proton acceptor; specific for D-alanine in catalysis. K34 is modified (N6-(pyridoxal phosphate)lysine). R129 contacts substrate. Y254 serves as the catalytic Proton acceptor; specific for L-alanine. A substrate-binding site is contributed by M302.

Belongs to the alanine racemase family. Pyridoxal 5'-phosphate is required as a cofactor.

It carries out the reaction L-alanine = D-alanine. It participates in amino-acid biosynthesis; D-alanine biosynthesis; D-alanine from L-alanine: step 1/1. Its function is as follows. Catalyzes the interconversion of L-alanine and D-alanine. May also act on other amino acids. This chain is Alanine racemase (alr), found in Vibrio vulnificus (strain CMCP6).